Consider the following 181-residue polypeptide: Dual-action ribosomal maturation protein DarP (181 aa).

Residues 1 to 23 (MTGIKKPMSQYQDDNELEDWGPS) form a disordered region.

The protein belongs to the DarP family.

The protein localises to the cytoplasm. Member of a network of 50S ribosomal subunit biogenesis factors which assembles along the 30S-50S interface, preventing incorrect 23S rRNA structures from forming. Promotes peptidyl transferase center (PTC) maturation. This chain is Dual-action ribosomal maturation protein DarP, found in Aeromonas salmonicida (strain A449).